Consider the following 352-residue polypeptide: Isopentenyl-diphosphate delta-isomerase (352 aa).

Residue 6–7 coordinates substrate; it reads RK. FMN is bound by residues 63 to 65, Ser-93, and Asn-122; that span reads AMT. 93–95 contributes to the substrate binding site; it reads SQR. Residue Gln-160 participates in substrate binding. Glu-161 contributes to the Mg(2+) binding site. FMN-binding positions include Lys-192, Thr-221, 271–273, and 292–293; these read GIR and SQ.

Belongs to the IPP isomerase type 2 family. In terms of assembly, homooctamer. Dimer of tetramers. It depends on FMN as a cofactor. NADPH is required as a cofactor. The cofactor is Mg(2+).

The protein localises to the cytoplasm. The enzyme catalyses isopentenyl diphosphate = dimethylallyl diphosphate. Its function is as follows. Involved in the biosynthesis of isoprenoids. Catalyzes the 1,3-allylic rearrangement of the homoallylic substrate isopentenyl (IPP) to its allylic isomer, dimethylallyl diphosphate (DMAPP). In Pyrobaculum arsenaticum (strain DSM 13514 / JCM 11321 / PZ6), this protein is Isopentenyl-diphosphate delta-isomerase.